The following is a 361-amino-acid chain: Carbamoyl phosphate synthase small chain (361 aa).

A CPSase region spans residues 1-173; the sequence is MRAALALEDG…SVREEYRFSD (173 aa). The L-glutamine site is built by Ser45, Gly225, and Gly227. The Glutamine amidotransferase type-1 domain occupies 177–361; sequence EIVVIDCGVK…DEFLAMCREH (185 aa). Cys252 functions as the Nucleophile in the catalytic mechanism. The L-glutamine site is built by Leu253, Gln256, Asn294, Gly296, and Phe297. Active-site residues include His337 and Glu339.

This sequence belongs to the CarA family. Composed of two chains; the small (or glutamine) chain promotes the hydrolysis of glutamine to ammonia, which is used by the large (or ammonia) chain to synthesize carbamoyl phosphate. Tetramer of heterodimers (alpha,beta)4.

The enzyme catalyses hydrogencarbonate + L-glutamine + 2 ATP + H2O = carbamoyl phosphate + L-glutamate + 2 ADP + phosphate + 2 H(+). It carries out the reaction L-glutamine + H2O = L-glutamate + NH4(+). It participates in amino-acid biosynthesis; L-arginine biosynthesis; carbamoyl phosphate from bicarbonate: step 1/1. The protein operates within pyrimidine metabolism; UMP biosynthesis via de novo pathway; (S)-dihydroorotate from bicarbonate: step 1/3. Its function is as follows. Small subunit of the glutamine-dependent carbamoyl phosphate synthetase (CPSase). CPSase catalyzes the formation of carbamoyl phosphate from the ammonia moiety of glutamine, carbonate, and phosphate donated by ATP, constituting the first step of 2 biosynthetic pathways, one leading to arginine and/or urea and the other to pyrimidine nucleotides. The small subunit (glutamine amidotransferase) binds and cleaves glutamine to supply the large subunit with the substrate ammonia. The sequence is that of Carbamoyl phosphate synthase small chain from Methanopyrus kandleri (strain AV19 / DSM 6324 / JCM 9639 / NBRC 100938).